The sequence spans 168 residues: Nucleoside deoxyribosyltransferase (168 aa).

The active-site Nucleophile is the Glu-103.

Belongs to the nucleoside deoxyribosyltransferase family.

It carries out the reaction 2-deoxy-D-ribosyl-base(1) + base(2) = 2-deoxy-D-ribosyl-base(2) + base(1).. It participates in nucleotide metabolism; nucleotide salvage pathway. In terms of biological role, catalyzes the cleavage of the glycosidic bond of 2'-deoxyribonucleosides and the transfer of the deoxyribosyl moiety to an acceptor purine or pyrimidine base. This is Nucleoside deoxyribosyltransferase (ntd) from Limosilactobacillus fermentum (Lactobacillus fermentum).